We begin with the raw amino-acid sequence, 918 residues long: uncharacterized protein (918 aa).

7 disordered regions span residues 66–150 (AMVH…SSYG), 226–283 (GADG…NADF), 326–481 (ADGT…EFGN), 515–548 (ALEKNHEKNSDGTFKDESKGSNSRVNRTDGGSNL), 594–707 (EITH…NAVK), 737–774 (NHSNDSDASSDSKIHSKSVDGTELTDAKHSNVSTSHLT), and 800–918 (HITH…IIQM). A compositionally biased stretch (low complexity) spans 79 to 89 (QSSGSSSNTHS). The segment covering 103–127 (NSEKKDGYNKESKVDEANENTKIKS) has biased composition (basic and acidic residues). Low complexity predominate over residues 270-281 (SKKAASASGSNA). Composition is skewed to polar residues over residues 326-354 (ADGTSSMEASHAGSNSSKINSASGQSSDL), 363-372 (KSHSTSNKTD), and 379-404 (ANQSAGSISEQIGKNGQRSLNESSIE). Positions 430-441 (SSSHSKSASGTS) are enriched in low complexity. The span at 515–533 (ALEKNHEKNSDGTFKDESK) shows a compositional bias: basic and acidic residues. 2 stretches are compositionally biased toward polar residues: residues 534-545 (GSNSRVNRTDGG) and 604-619 (VAASANAKSSLDTSMS). A compositionally biased stretch (low complexity) spans 632–647 (SSQAADSHDAISASSD). Positions 648-660 (VDAKIVKHADRSE) are enriched in basic and acidic residues. Residues 661–672 (SISNDSSNQTAS) are compositionally biased toward polar residues. The segment covering 673–688 (EHNDSSKQSEHEKRQN) has biased composition (basic and acidic residues). The span at 689–702 (ADGSFSDVSSNSAK) shows a compositional bias: polar residues. Composition is skewed to basic and acidic residues over residues 738–765 (HSNDSDASSDSKIHSKSVDGTELTDAKH), 800–814 (HITHEKSRADVDAGH), 830–846 (EGFKHHSDLESRGEGAQ), and 883–918 (LAKDGKGHFTETKDGSESHHKIDDKDVKQHKDIIQM).

This is an uncharacterized protein from Caenorhabditis elegans.